Here is a 421-residue protein sequence, read N- to C-terminus: Probable N-acetylgalactosaminyltransferase 8 (421 aa).

The Cytoplasmic segment spans residues 1 to 3 (MRR). The helical; Signal-anchor for type II membrane protein transmembrane segment at 4 to 24 (HVVLSIFVFAGIVFAAEEAEK) threads the bilayer. At 25-421 (LPKCEHVDPY…ELEPKVHDEL (397 aa)) the chain is on the lumenal side. 2 N-linked (GlcNAc...) asparagine glycosylation sites follow: N52 and N58. 2 disulfide bridges follow: C98-C331 and C322-C399. The catalytic subdomain A stretch occupies residues 106–219 (SYSTSVVVIH…ERWLEPLLQP (114 aa)). Residues D147 and R180 each contribute to the substrate site. Mn(2+) is bound at residue D203. Substrate is bound at residue S204. H205 is a Mn(2+) binding site. The interval 277–339 (PFNSPAMPGG…PCSRVGHVFR (63 aa)) is catalytic subdomain B. W308 is a substrate binding site. H336 is a Mn(2+) binding site. 2 residues coordinate substrate: R339 and Y344. Positions 418-421 (HDEL) match the Prevents secretion from ER motif.

This sequence belongs to the glycosyltransferase 2 family. GalNAc-T subfamily. The cofactor is Mn(2+).

The protein resides in the golgi apparatus membrane. Its pathway is protein modification; protein glycosylation. Its function is as follows. Potential glycopeptide transferase involved in O-linked oligosaccharide biosynthesis. In contrast to other members of the family, it does not act as a peptide transferase that transfers GalNAc onto serine or threonine residue on peptides that have been tested. Some peptide transferase activity is however not excluded, considering that its appropriate peptide substrate may remain unidentified. In Caenorhabditis elegans, this protein is Probable N-acetylgalactosaminyltransferase 8 (gly-8).